A 100-amino-acid chain; its full sequence is Transcription and mRNA export factor SUS1 (100 aa).

This sequence belongs to the ENY2 family. In terms of assembly, component of the nuclear pore complex (NPC)-associated TREX-2 complex (transcription and export complex 2), composed of at least SUS1, SAC3, THP1, SEM1, and CDC31. TREX-2 contains 2 SUS1 chains. The TREX-2 complex interacts with the nucleoporin NUP1. Component of the 1.8 MDa SAGA transcription coactivator-HAT complex. SAGA is built of 5 distinct domains with specialized functions. Within the SAGA complex, SUS1, SGF11, SGF73 and UBP8 form an additional subcomplex of SAGA called the DUB module (deubiquitination module). Interacts directly with THP1, SAC3, SGF11, and with the RNA polymerase II.

The protein resides in the nucleus. It localises to the nucleoplasm. The protein localises to the cytoplasm. Its subcellular location is the P-body. In terms of biological role, involved in mRNA export coupled transcription activation by association with both the TREX-2 and the SAGA complexes. At the promoters, SAGA is required for recruitment of the basal transcription machinery. It influences RNA polymerase II transcriptional activity through different activities such as TBP interaction and promoter selectivity, interaction with transcription activators, and chromatin modification through histone acetylation and deubiquitination. Within the SAGA complex, participates in a subcomplex required for deubiquitination of H2B and for the maintenance of steady-state H3 methylation levels. The TREX-2 complex functions in docking export-competent ribonucleoprotein particles (mRNPs) to the nuclear entrance of the nuclear pore complex (nuclear basket). TREX-2 participates in mRNA export and accurate chromatin positioning in the nucleus by tethering genes to the nuclear periphery. May also be involved in cytoplasmic mRNA decay by interaction with components of P-bodies. The protein is Transcription and mRNA export factor SUS1 of Cryptococcus neoformans var. neoformans serotype D (strain B-3501A) (Filobasidiella neoformans).